A 308-amino-acid chain; its full sequence is 2-methylisocitrate lyase (308 aa).

51 to 53 (SGA) is a substrate binding site. The Mg(2+) site is built by Asp-90 and Asp-92. Substrate is bound by residues 127–128 (CG), Arg-160, Glu-190, 212–214 (NMT), Arg-243, and Arg-272.

It belongs to the isocitrate lyase/PEP mutase superfamily. Methylisocitrate lyase family. As to quaternary structure, homotetramer; dimer of dimers. Mg(2+) is required as a cofactor.

It catalyses the reaction (2S,3R)-3-hydroxybutane-1,2,3-tricarboxylate = pyruvate + succinate. It functions in the pathway organic acid metabolism; propanoate degradation. Its function is as follows. Involved in the catabolism of short chain fatty acids (SCFA) via the 2-methylcitrate cycle I (propionate degradation route). Catalyzes the thermodynamically favored C-C bond cleavage of (2R,3S)-2-methylisocitrate to yield pyruvate and succinate via an alpha-carboxy-carbanion intermediate. The protein is 2-methylisocitrate lyase of Aeropyrum pernix (strain ATCC 700893 / DSM 11879 / JCM 9820 / NBRC 100138 / K1).